We begin with the raw amino-acid sequence, 368 residues long: Agmatine deiminase (368 aa).

The active-site Amidino-cysteine intermediate is C357.

Belongs to the agmatine deiminase family. In terms of assembly, homodimer.

The catalysed reaction is agmatine + H2O = N-carbamoylputrescine + NH4(+). It functions in the pathway amine and polyamine biosynthesis; putrescine biosynthesis via agmatine pathway; N-carbamoylputrescine from agmatine: step 1/1. In terms of biological role, mediates the hydrolysis of agmatine into N-carbamoylputrescine in the arginine decarboxylase (ADC) pathway of putrescine biosynthesis, a basic polyamine. This is Agmatine deiminase from Pseudomonas putida (strain ATCC 47054 / DSM 6125 / CFBP 8728 / NCIMB 11950 / KT2440).